A 214-amino-acid chain; its full sequence is Cytochrome c biogenesis ATP-binding export protein CcmA (214 aa).

Residues 12–214 enclose the ABC transporter domain; the sequence is LAARALAFSR…TRMLTLEAAA (203 aa). Residue 44 to 51 coordinates ATP; that stretch reads GDNGAGKT.

Belongs to the ABC transporter superfamily. CcmA exporter (TC 3.A.1.107) family. As to quaternary structure, the complex is composed of two ATP-binding proteins (CcmA) and two transmembrane proteins (CcmB).

The protein localises to the cell inner membrane. It catalyses the reaction heme b(in) + ATP + H2O = heme b(out) + ADP + phosphate + H(+). In terms of biological role, part of the ABC transporter complex CcmAB involved in the biogenesis of c-type cytochromes; once thought to export heme, this seems not to be the case, but its exact role is uncertain. Responsible for energy coupling to the transport system. This Xanthomonas campestris pv. campestris (strain 8004) protein is Cytochrome c biogenesis ATP-binding export protein CcmA.